The chain runs to 291 residues: Protease HtpX homolog (291 aa).

2 consecutive transmembrane segments (helical) span residues 4–24 (IVLF…TMRL) and 39–59 (TSLL…SLAI). A Zn(2+)-binding site is contributed by His-145. Glu-146 is an active-site residue. Residue His-149 participates in Zn(2+) binding. 2 helical membrane passes run 156-176 (VTLA…SRII) and 195-215 (FFVT…IIVM). Residue Glu-222 participates in Zn(2+) binding.

Belongs to the peptidase M48B family. The cofactor is Zn(2+).

It is found in the cell inner membrane. In Thiobacillus denitrificans (strain ATCC 25259 / T1), this protein is Protease HtpX homolog.